The following is a 426-amino-acid chain: Phytoene synthase 3, chloroplastic (426 aa).

Residues 1-52 (MMSTSRAVKSPACAARRRQWSADAPNRTATFLACRHGRRLGGGGGAPCSVRA) constitute a chloroplast transit peptide.

The protein belongs to the phytoene/squalene synthase family. As to expression, expressed in roots and endosperm.

Its subcellular location is the plastid. The protein localises to the chloroplast. It is found in the plastoglobule. It catalyses the reaction 2 (2E,6E,10E)-geranylgeranyl diphosphate = 15-cis-phytoene + 2 diphosphate. Functionally, catalyzes the conversion of geranylgeranyl diphosphate to phytoene. Mediates the first committed step in carotenoid biosynthesis. May play a role in regulating carotenoid flux in response to abiotic stress in roots. May control flux to carotenoid precursors that are required for abiotic stress-induced abscisic acid (ABA) formation in roots. The polypeptide is Phytoene synthase 3, chloroplastic (Zea mays (Maize)).